Reading from the N-terminus, the 96-residue chain is Putative pterin-4-alpha-carbinolamine dehydratase (96 aa).

It belongs to the pterin-4-alpha-carbinolamine dehydratase family.

It catalyses the reaction (4aS,6R)-4a-hydroxy-L-erythro-5,6,7,8-tetrahydrobiopterin = (6R)-L-erythro-6,7-dihydrobiopterin + H2O. The sequence is that of Putative pterin-4-alpha-carbinolamine dehydratase from Paraburkholderia xenovorans (strain LB400).